The chain runs to 95 residues: FXYD domain-containing ion transport regulator 6 (95 aa).

Positions 1 to 18 are cleaved as a signal peptide; it reads MEVVLLFLCGLLAPAVLA. Over 19–35 the chain is Extracellular; the sequence is SATEQEKEKDPFHYDYQ. Residues 36 to 58 traverse the membrane as a helical segment; the sequence is TLRIGGLVFAVVLFSVGILLILS. The Cytoplasmic portion of the chain corresponds to 59–95; the sequence is RRCKCSFNQKPRAPGDEEAQVENLVTANATEPQKAEN. The segment at 69-95 is disordered; it reads PRAPGDEEAQVENLVTANATEPQKAEN.

The protein belongs to the FXYD family. In terms of assembly, regulatory subunit of the sodium/potassium-transporting ATPase which is composed of a catalytic alpha subunit, a non-catalytic beta subunit and an additional regulatory subunit. The regulatory subunit, a member of the FXYD protein family, modulates the enzymatic activity in a tissue- and isoform-specific way by changing affinities of the Na+/K+-ATPase toward Na(+), K(+) or ATP.

Its subcellular location is the cell membrane. In terms of biological role, associates with and regulates the activity of the sodium/potassium-transporting ATPase (NKA) which catalyzes the hydrolysis of ATP coupled with the exchange of Na(+) and K(+) ions across the plasma membrane. Reduces the apparent affinity for intracellular Na(+) with no change in the apparent affinity for extracellular K(+). In addition to modulating NKA kinetics, may also function as a regulator of NKA localization to the plasma membrane. The sequence is that of FXYD domain-containing ion transport regulator 6 (FXYD6) from Bos taurus (Bovine).